The chain runs to 405 residues: Fragilysin (405 aa).

A signal peptide spans 1 to 25; sequence MFILNFNKMKNVKLLLMLGTAALLA. His356 serves as a coordination point for Zn(2+). Glu357 is an active-site residue. 2 residues coordinate Zn(2+): His360 and His366.

The protein belongs to the peptidase M10C family. The cofactor is Zn(2+).

Its subcellular location is the secreted. The catalysed reaction is Broad proteolytic specificity, bonds hydrolyzed includes -Gly-|-Leu-, -Met-|-Leu-, -Phe-|-Leu-, -Cys-|-Leu-, -Leu-|-Gly-.. In terms of biological role, diarrheal toxin that hydrolyzes gelatin, azocoll, actin, tropomyosin, and fibrinogen. This Bacteroides fragilis protein is Fragilysin (btfP).